Here is a 396-residue protein sequence, read N- to C-terminus: GTPase Obg (396 aa).

The Obg domain maps to 1–159 (MKFVDEATIY…RNIRLELKVL (159 aa)). The OBG-type G domain occupies 160–333 (ADVGLLGLPN…LCQDIMTWIE (174 aa)). GTP-binding positions include 166–173 (GLPNAGKS), 191–195 (FTTLV), 213–216 (DIPG), 283–286 (NKTD), and 314–316 (SAL). Positions 173 and 193 each coordinate Mg(2+). Disordered stretches follow at residues 337–356 (EEERDDPEVAEADRLNREQM) and 373–396 (LARKKAKESDDDDDDEDVEVFYAP). The segment covering 347-356 (EADRLNREQM) has biased composition (basic and acidic residues). The span at 381 to 396 (SDDDDDDEDVEVFYAP) shows a compositional bias: acidic residues.

The protein belongs to the TRAFAC class OBG-HflX-like GTPase superfamily. OBG GTPase family. As to quaternary structure, monomer. Mg(2+) is required as a cofactor.

The protein resides in the cytoplasm. Its function is as follows. An essential GTPase which binds GTP, GDP and possibly (p)ppGpp with moderate affinity, with high nucleotide exchange rates and a fairly low GTP hydrolysis rate. Plays a role in control of the cell cycle, stress response, ribosome biogenesis and in those bacteria that undergo differentiation, in morphogenesis control. The chain is GTPase Obg from Hahella chejuensis (strain KCTC 2396).